A 147-amino-acid chain; its full sequence is Hemoglobin subunit beta (147 aa).

The region spanning 3–147 (HWTAEEKQII…VAHALARKYH (145 aa)) is the Globin domain. Heme b contacts are provided by His64 and His93.

As to quaternary structure, heterotetramer of two alpha (or alpha-D) and two beta chains. As to expression, red blood cells.

Functionally, involved in oxygen transport from the lung to the various peripheral tissues. The beta chain is a component of adult hemoglobin A and D. The protein is Hemoglobin subunit beta of Aythya fuligula (Tufted duck).